The sequence spans 140 residues: Large ribosomal subunit protein bL19 (140 aa).

A compositionally biased stretch (basic and acidic residues) spans Arg113–Ile126. Residues Arg113–Glu140 form a disordered region.

It belongs to the bacterial ribosomal protein bL19 family.

In terms of biological role, this protein is located at the 30S-50S ribosomal subunit interface and may play a role in the structure and function of the aminoacyl-tRNA binding site. This is Large ribosomal subunit protein bL19 from Xanthobacter autotrophicus (strain ATCC BAA-1158 / Py2).